The chain runs to 403 residues: Betaine--homocysteine S-methyltransferase 1 (403 aa).

Residues 8-311 (KGLLERLDAG…YHTRAIAEEL (304 aa)) enclose the Hcy-binding domain. Zn(2+)-binding residues include Cys214, Cys296, and Cys297.

As to quaternary structure, homotetramer. Requires Zn(2+) as cofactor.

Its subcellular location is the cytoplasm. The enzyme catalyses L-homocysteine + glycine betaine = N,N-dimethylglycine + L-methionine. It participates in amine and polyamine degradation; betaine degradation; sarcosine from betaine: step 1/2. The protein operates within amino-acid biosynthesis; L-methionine biosynthesis via de novo pathway; L-methionine from L-homocysteine (BhmT route): step 1/1. Functionally, involved in the regulation of homocysteine metabolism. Converts betaine and homocysteine to dimethylglycine and methionine, respectively. This reaction is also required for the irreversible oxidation of choline. The chain is Betaine--homocysteine S-methyltransferase 1 (bhmt) from Xenopus tropicalis (Western clawed frog).